The sequence spans 225 residues: UPF0758 protein Sbal223_0402 (225 aa).

One can recognise an MPN domain in the interval 102–224; that stretch reads VLTNPDLTRD…IVSFAERGWI (123 aa). Residues H173, H175, and D186 each contribute to the Zn(2+) site. Residues 173–186 carry the JAMM motif motif; it reads HNHPSGIAEPSQAD.

This sequence belongs to the UPF0758 family.

This Shewanella baltica (strain OS223) protein is UPF0758 protein Sbal223_0402.